Here is a 128-residue protein sequence, read N- to C-terminus: UPF0102 protein BCG_2919c (128 aa).

Belongs to the UPF0102 family.

In Mycobacterium bovis (strain BCG / Pasteur 1173P2), this protein is UPF0102 protein BCG_2919c.